The following is a 321-amino-acid chain: Lipoyl synthase (321 aa).

[4Fe-4S] cluster is bound by residues Cys60, Cys65, Cys71, Cys86, Cys90, Cys93, and Ser299. A Radical SAM core domain is found at 72–288 (WEKKHATFMI…ETIGRTKGFL (217 aa)).

The protein belongs to the radical SAM superfamily. Lipoyl synthase family. It depends on [4Fe-4S] cluster as a cofactor.

The protein localises to the cytoplasm. The enzyme catalyses [[Fe-S] cluster scaffold protein carrying a second [4Fe-4S](2+) cluster] + N(6)-octanoyl-L-lysyl-[protein] + 2 oxidized [2Fe-2S]-[ferredoxin] + 2 S-adenosyl-L-methionine + 4 H(+) = [[Fe-S] cluster scaffold protein] + N(6)-[(R)-dihydrolipoyl]-L-lysyl-[protein] + 4 Fe(3+) + 2 hydrogen sulfide + 2 5'-deoxyadenosine + 2 L-methionine + 2 reduced [2Fe-2S]-[ferredoxin]. It functions in the pathway protein modification; protein lipoylation via endogenous pathway; protein N(6)-(lipoyl)lysine from octanoyl-[acyl-carrier-protein]: step 2/2. Its function is as follows. Catalyzes the radical-mediated insertion of two sulfur atoms into the C-6 and C-8 positions of the octanoyl moiety bound to the lipoyl domains of lipoate-dependent enzymes, thereby converting the octanoylated domains into lipoylated derivatives. In Mesorhizobium japonicum (strain LMG 29417 / CECT 9101 / MAFF 303099) (Mesorhizobium loti (strain MAFF 303099)), this protein is Lipoyl synthase.